Consider the following 368-residue polypeptide: Putative potassium channel KAT5 (368 aa).

3 helical membrane passes run 33–53, 97–117, and 132–152; these read WWHM…PFEL, LLNL…ARVE, and LLCV…WMVF. An intramembrane region (pore-forming) is located at residues 180-199; that stretch reads CAVYWSITTLATVGYGDLHA. The helical transmembrane segment at 206 to 226 threads the bilayer; that stretch reads LFSIAFMLFNMGLTSYIIGNI. 225–344 is a binding site for a nucleoside 3',5'-cyclic phosphate; that stretch reads NITNLVVRET…CIVFSNFILV (120 aa).

It belongs to the potassium channel family. Plant (TC 1.A.1.4) subfamily.

It localises to the membrane. In terms of biological role, putative inward-rectifying potassium channel. This chain is Putative potassium channel KAT5, found in Oryza sativa subsp. japonica (Rice).